A 244-amino-acid polypeptide reads, in one-letter code: Type III pantothenate kinase (244 aa).

Position 8-15 (8-15 (DQGNSACK)) interacts with ATP. Residue 94–97 (GADR) participates in substrate binding. Residue Asp-96 is the Proton acceptor of the active site. Asp-117 contributes to the K(+) binding site. Thr-120 is a binding site for ATP. Thr-175 is a substrate binding site.

Belongs to the type III pantothenate kinase family. In terms of assembly, homodimer. Requires NH4(+) as cofactor. The cofactor is K(+).

Its subcellular location is the cytoplasm. It catalyses the reaction (R)-pantothenate + ATP = (R)-4'-phosphopantothenate + ADP + H(+). It participates in cofactor biosynthesis; coenzyme A biosynthesis; CoA from (R)-pantothenate: step 1/5. Catalyzes the phosphorylation of pantothenate (Pan), the first step in CoA biosynthesis. In Porphyromonas gingivalis (strain ATCC 33277 / DSM 20709 / CIP 103683 / JCM 12257 / NCTC 11834 / 2561), this protein is Type III pantothenate kinase.